A 553-amino-acid polypeptide reads, in one-letter code: Methionine--tRNA ligase (553 aa).

The 'HIGH' region motif lies at 12-22; it reads PYANSQLHLGH. Zn(2+)-binding residues include cysteine 144, cysteine 147, cysteine 157, and cysteine 160. The 'KMSKS' region signature appears at 332-336; sequence KFSKS. Lysine 335 contributes to the ATP binding site.

It belongs to the class-I aminoacyl-tRNA synthetase family. MetG type 1 subfamily. Monomer. Zn(2+) is required as a cofactor.

It is found in the cytoplasm. It catalyses the reaction tRNA(Met) + L-methionine + ATP = L-methionyl-tRNA(Met) + AMP + diphosphate. Functionally, is required not only for elongation of protein synthesis but also for the initiation of all mRNA translation through initiator tRNA(fMet) aminoacylation. The protein is Methionine--tRNA ligase of Dehalococcoides mccartyi (strain ATCC BAA-2100 / JCM 16839 / KCTC 5957 / BAV1).